A 255-amino-acid polypeptide reads, in one-letter code: MSMEDPFFVVKGEVQKAVNTAQGLFQRWTELLQGPSAATREEIDWTTNELRNNLRSIEWDLEDLDETISIVEANPRKFNLDATELSIRKAFITSTRQIVRDMKDQMSASSVQALAERKNRQALLGDSSSQNWDAGVTDRYGRLDRELQLANSHFIEEQQAQQQLIVEQQDEQLELVSGSIGVLKNMSQRIGGELEEQAVMLDDFSHELESTQSRLDNVMKKLAKVSHMTSDRRQWCAIAILFAVLLVVLTLFLVL.

N-acetylserine is present on serine 2. Serine 2 bears the Phosphoserine mark. The interval 2 to 112 is interaction with BLTP3B; sequence SMEDPFFVVK…KDQMSASSVQ (111 aa). The interval 2-168 is required for interaction with VPS51; sequence SMEDPFFVVK…QAQQQLIVEQ (167 aa). Topologically, residues 2-234 are cytoplasmic; sequence SMEDPFFVVK…VSHMTSDRRQ (233 aa). Residues 41 to 74 are a coiled coil; sequence EEIDWTTNELRNNLRSIEWDLEDLDETISIVEAN. Serine 129 and serine 152 each carry phosphoserine. Residues 163-225 enclose the t-SNARE coiled-coil homology domain; it reads QLIVEQQDEQ…DNVMKKLAKV (63 aa). The chain crosses the membrane as a helical; Anchor for type IV membrane protein span at residues 235–255; sequence WCAIAILFAVLLVVLTLFLVL.

Belongs to the syntaxin family. As to quaternary structure, identified in a complex containing STX6, STX12, VAMP4 and VTI1A. Binds EEA1. Interacts with VPS45A and GOPC. Interacts with MARCHF2; the interaction promotes MARCHF2-mediated ubiquitination and degradation of CFTR. Interacts with MARCHF3. Interacts with BLTP3B (via C-terminal coiled-coil domain). Interacts with BAIAP3; this interaction is increased in the presence of calcium. Interacts (via N-terminus) with VPS51. Interacts with VPS13B. In terms of tissue distribution, widely expressed, with relatively higher expression in brain, lung and kidney.

Its subcellular location is the golgi apparatus membrane. It is found in the golgi apparatus. The protein localises to the trans-Golgi network membrane. It localises to the recycling endosome membrane. SNARE promoting movement of transport vesicles to target membranes. Targets endosomes to the trans-Golgi network, and may therefore function in retrograde trafficking. Together with SNARE STX12, promotes movement of vesicles from endosomes to the cell membrane, and may therefore function in the endocytic recycling pathway. This is Syntaxin-6 (Stx6) from Rattus norvegicus (Rat).